Consider the following 218-residue polypeptide: Small ribosomal subunit protein uS3c (218 aa).

The KH type-2 domain maps to 47–118 (VQKNIRISSG…KLNIAITRIS (72 aa)).

It belongs to the universal ribosomal protein uS3 family. In terms of assembly, part of the 30S ribosomal subunit.

It localises to the plastid. Its subcellular location is the chloroplast. The polypeptide is Small ribosomal subunit protein uS3c (rps3) (Lepidium virginicum (Virginia pepperweed)).